Consider the following 273-residue polypeptide: NLP effector protein 10 (273 aa).

An N-terminal signal peptide occupies residues 1 to 21; it reads MKLPTFLIGFVALLVTSNGSA. Asparagine 91 is a glycosylation site (N-linked (GlcNAc...) asparagine). A Conserved undecapeptide motif motif is present at residues 129-139; sequence AIMYAWYLPRA. The Conserved heptapeptide motif motif lies at 149–155; sequence GHRHYWL.

The protein belongs to the Necrosis inducing protein (NPP1) family.

The protein resides in the secreted. In terms of biological role, secreted effector that acts as a pathogen-associated molecular pattern (PAMP) recognized by the plant immune system. Seems not to induce necrosis in Nicotiana benthamiana leaves but significantly improves disease resistance of Arabidopsis thaliana to Hyaloperonospora arabidopsidis and causes an inhibition of plant growth which is typically associated with enhanced immunity when over-expressed in Arabidopsis. This chain is NLP effector protein 10, found in Plasmopara viticola (Downy mildew of grapevine).